A 20-amino-acid chain; its full sequence is Cicerin (20 aa).

A disordered region spans residues 1–20 (ARCENFADSYRQPPISSSQT).

Functionally, has antifungal activity against B.cinerea, F.oxysporum and M.arachidicola. Inhibits cell-free translation in rabbit reticulocyte lysate system. The polypeptide is Cicerin (Cicer arietinum (Chickpea)).